Here is a 561-residue protein sequence, read N- to C-terminus: Putative transport protein CKO_02260 (561 aa).

The next 5 membrane-spanning stretches (helical) occupy residues Leu8–Gly28, Leu32–Gln52, Phe66–Phe86, Met94–Phe114, and Asn158–Ala178. 2 RCK C-terminal domains span residues Arg200–Asn288 and Val292–Phe373. The next 5 helical transmembrane spans lie at Leu383–Phe403, Phe406–Leu426, Phe447–Gly467, Met475–Ala495, and Ala540–Leu560.

Belongs to the AAE transporter (TC 2.A.81) family. YbjL subfamily.

It is found in the cell membrane. This chain is Putative transport protein CKO_02260, found in Citrobacter koseri (strain ATCC BAA-895 / CDC 4225-83 / SGSC4696).